Reading from the N-terminus, the 421-residue chain is Mannose-1-phosphate guanyltransferase alpha-A (421 aa).

This sequence belongs to the transferase hexapeptide repeat family.

It catalyses the reaction alpha-D-mannose 1-phosphate + GTP + H(+) = GDP-alpha-D-mannose + diphosphate. It functions in the pathway nucleotide-sugar biosynthesis; GDP-alpha-D-mannose biosynthesis; GDP-alpha-D-mannose from alpha-D-mannose 1-phosphate (GTP route): step 1/1. The protein is Mannose-1-phosphate guanyltransferase alpha-A (gmppa-a) of Xenopus laevis (African clawed frog).